Reading from the N-terminus, the 60-residue chain is Large ribosomal subunit protein uL30 (60 aa).

Belongs to the universal ribosomal protein uL30 family. Part of the 50S ribosomal subunit.

This chain is Large ribosomal subunit protein uL30, found in Streptococcus mutans serotype c (strain ATCC 700610 / UA159).